The chain runs to 73 residues: Mu-scoloptoxin(15)-Ssd1a (73 aa).

Residues 1–20 (MKFHIIFCLLAALMMTSAFA) form the signal peptide.

Post-translationally, contains 2 disulfide bonds. As to expression, expressed by the venom gland.

It is found in the secreted. Voltage-gated sodium channel inhibitor. This Scolopendra dehaani (Thai centipede) protein is Mu-scoloptoxin(15)-Ssd1a.